The chain runs to 346 residues: Holliday junction branch migration complex subunit RuvB (346 aa).

Residues 1 to 11 are compositionally biased toward polar residues; sequence MTEQRTIASSA. The segment at 1-20 is disordered; the sequence is MTEQRTIASSATREDEAADA. The large ATPase domain (RuvB-L) stretch occupies residues 1 to 183; that stretch reads MTEQRTIASS…FGIVQRLEFY (183 aa). Residues I22, R23, G64, K67, T68, T69, 130-132, R173, Y183, and R220 contribute to the ATP site; that span reads EDF. A Mg(2+)-binding site is contributed by T68. Positions 184–254 are small ATPAse domain (RuvB-S); the sequence is SPQELTRIVI…VAQAAMQMLK (71 aa). The interval 257–346 is head domain (RuvB-H); the sequence is PEGFDELDRR…PAIGEPGDLF (90 aa). DNA contacts are provided by R293, R312, and R317.

Belongs to the RuvB family. In terms of assembly, homohexamer. Forms an RuvA(8)-RuvB(12)-Holliday junction (HJ) complex. HJ DNA is sandwiched between 2 RuvA tetramers; dsDNA enters through RuvA and exits via RuvB. An RuvB hexamer assembles on each DNA strand where it exits the tetramer. Each RuvB hexamer is contacted by two RuvA subunits (via domain III) on 2 adjacent RuvB subunits; this complex drives branch migration. In the full resolvosome a probable DNA-RuvA(4)-RuvB(12)-RuvC(2) complex forms which resolves the HJ.

The protein localises to the cytoplasm. It carries out the reaction ATP + H2O = ADP + phosphate + H(+). The RuvA-RuvB-RuvC complex processes Holliday junction (HJ) DNA during genetic recombination and DNA repair, while the RuvA-RuvB complex plays an important role in the rescue of blocked DNA replication forks via replication fork reversal (RFR). RuvA specifically binds to HJ cruciform DNA, conferring on it an open structure. The RuvB hexamer acts as an ATP-dependent pump, pulling dsDNA into and through the RuvAB complex. RuvB forms 2 homohexamers on either side of HJ DNA bound by 1 or 2 RuvA tetramers; 4 subunits per hexamer contact DNA at a time. Coordinated motions by a converter formed by DNA-disengaged RuvB subunits stimulates ATP hydrolysis and nucleotide exchange. Immobilization of the converter enables RuvB to convert the ATP-contained energy into a lever motion, pulling 2 nucleotides of DNA out of the RuvA tetramer per ATP hydrolyzed, thus driving DNA branch migration. The RuvB motors rotate together with the DNA substrate, which together with the progressing nucleotide cycle form the mechanistic basis for DNA recombination by continuous HJ branch migration. Branch migration allows RuvC to scan DNA until it finds its consensus sequence, where it cleaves and resolves cruciform DNA. In Xanthomonas campestris pv. campestris (strain B100), this protein is Holliday junction branch migration complex subunit RuvB.